Reading from the N-terminus, the 451-residue chain is Phosphoglucosamine mutase (451 aa).

Serine 103 acts as the Phosphoserine intermediate in catalysis. Residues serine 103, aspartate 243, aspartate 245, and aspartate 247 each coordinate Mg(2+). Phosphoserine is present on serine 103.

This sequence belongs to the phosphohexose mutase family. The cofactor is Mg(2+). In terms of processing, activated by phosphorylation.

It carries out the reaction alpha-D-glucosamine 1-phosphate = D-glucosamine 6-phosphate. In terms of biological role, catalyzes the conversion of glucosamine-6-phosphate to glucosamine-1-phosphate. The protein is Phosphoglucosamine mutase of Lactiplantibacillus plantarum (strain ATCC BAA-793 / NCIMB 8826 / WCFS1) (Lactobacillus plantarum).